We begin with the raw amino-acid sequence, 86 residues long: Serine protease inhibitor Kazal-type 4 (86 aa).

The first 26 residues, 1–26 (MAMHLWLVTLTLVPLLGMDRELMVSA), serve as a signal peptide directing secretion. The Kazal-like domain occupies 31–86 (FPRMPFCEHMAELPNCPQTPNLICGTDGLTYENECHLCLTRMKTMKDIQIMKDGQC). 3 cysteine pairs are disulfide-bonded: cysteine 37–cysteine 68, cysteine 46–cysteine 65, and cysteine 54–cysteine 86.

In terms of tissue distribution, expressed in the intestinal tract.

Its subcellular location is the secreted. The sequence is that of Serine protease inhibitor Kazal-type 4 (Spink4) from Mus musculus (Mouse).